A 588-amino-acid polypeptide reads, in one-letter code: L-fucose isomerase (588 aa).

Active-site proton acceptor residues include Glu-335 and Asp-359. Glu-335, Asp-359, and His-525 together coordinate Mn(2+).

Belongs to the L-fucose isomerase family. Requires Mn(2+) as cofactor.

The protein resides in the cytoplasm. The enzyme catalyses L-fucose = L-fuculose. The protein operates within carbohydrate degradation; L-fucose degradation; L-lactaldehyde and glycerone phosphate from L-fucose: step 1/3. Functionally, converts the aldose L-fucose into the corresponding ketose L-fuculose. This chain is L-fucose isomerase, found in Streptococcus pneumoniae (strain 70585).